The following is a 252-amino-acid chain: MKNRLTIGLLLAAIYLFWLLLSAPARLLALTLSDDARLAQTSGTLWQGEAHQASWRGVELAYLRWEFGFSTWLPGWHIRFNDPSGLRGQAWLHGLNEFVVREGRLVIPARLISQRLALGMPLEARGQLALTLPEASFNANGCRRIAASAVQWQDAALSSPAGLLELAQVNGKLSCTPAGALAVALTQDSHQLSLTGQGVLTPDGRYTFNGTLQPRQAAPALLTLLVAQNGRKDEQGRIPWRWQGEWLSEEKK.

The Cytoplasmic portion of the chain corresponds to Met1 to Arg4. The chain crosses the membrane as a helical span at residues Leu5–Ala25. Residues Arg26 to Lys252 are Periplasmic-facing.

It belongs to the GSP N family.

Its subcellular location is the cell inner membrane. Its function is as follows. Involved in a type II secretion system (T2SS, formerly general secretion pathway, GSP) for the export of proteins. Required for the translocation of pullulanase. The protein is Type II secretion system protein N (pulN) of Klebsiella pneumoniae.